The sequence spans 217 residues: tRNA 5-hydroxyuridine methyltransferase (217 aa).

S-adenosyl-L-methionine-binding positions include Met-38, Ser-68, Glu-85, 113–114, and Asp-133; that span reads DA. Mg(2+) contacts are provided by Asp-133, Asp-159, and Asn-160.

It belongs to the class I-like SAM-binding methyltransferase superfamily. Cation-dependent O-methyltransferase family. Homodimer.

It carries out the reaction 5-hydroxyuridine(34) in tRNA + S-adenosyl-L-methionine = 5-methoxyuridine(34) in tRNA + S-adenosyl-L-homocysteine + H(+). Its function is as follows. Catalyzes the methylation of 5-hydroxyuridine (ho5U) to form 5-methoxyuridine (mo5U) at position 34 in tRNAs. This Bacillus subtilis (strain 168) protein is tRNA 5-hydroxyuridine methyltransferase.